Here is a 354-residue protein sequence, read N- to C-terminus: Non-structural protein NS2 (354 aa).

2 disordered regions span residues 163–196 (NERESAPRLQVQSVASREESRWMDDDEAKVDNEA) and 229–269 (DERD…THIT). Composition is skewed to basic and acidic residues over residues 178–196 (SREESRWMDDDEAKVDNEA) and 237–249 (DERGDEEQVKTLS). Acidic residues predominate over residues 250–260 (DDDDQGEDASD).

Its function is as follows. Single-stranded RNA-binding protein. This is Non-structural protein NS2 (Segment-8) from Bluetongue virus 17 (isolate USA) (BTV 17).